Consider the following 272-residue polypeptide: Undecaprenyl-diphosphatase (272 aa).

8 consecutive transmembrane segments (helical) span residues M1 to I21, Q39 to F59, W91 to I111, S117 to I137, L151 to T171, F196 to L216, L228 to L248, and L251 to I271.

It belongs to the UppP family.

Its subcellular location is the cell inner membrane. It catalyses the reaction di-trans,octa-cis-undecaprenyl diphosphate + H2O = di-trans,octa-cis-undecaprenyl phosphate + phosphate + H(+). Functionally, catalyzes the dephosphorylation of undecaprenyl diphosphate (UPP). Confers resistance to bacitracin. In Colwellia psychrerythraea (strain 34H / ATCC BAA-681) (Vibrio psychroerythus), this protein is Undecaprenyl-diphosphatase.